The following is a 565-amino-acid chain: MKATQTLIATTKELPKEAVLTSHQYMLKAGLIKKLASGIYTWMPIGLKVLQKIQNIVREEMNKAGASELLLPSVLPSELLQETHRWDKFGPELLKLKDRHERDFCYGPTHEEPIVDMARDTIKSYKQLPLNLYQIQTKFRDEIRPRFGVMRAREFIMKDAYSFHENSECLHNTYNKMHETYCNILDKIGLVYRPVRADTGAIGGDNSHEFQVLANAGEDIICYSNGSDYAANIELATYAKPDLSTRAVSENTITKIHTPNIKTIEKLCTELDFDIKKTIKTMVIKDAKGNFFALVIRGDHELNETKINKLEQIVAPYTLATKDEIFSIFNANPGSLGIVNCPVQIIADYSAMMIEDICCGANEDDYHFTNVNWGRDITSYQIADIRNVVTGDISPDNNGTLELTNGIEVGHIFELEDVYSKPMNANIIGQDGKSKPMLMGCYGFGVSRVMAAAIEQSHDENGIIWPETIAPYQVAILPINYNKSESVKQTADKLYQELLVKGIDVILDDRGARPGVMFADADLIGFSHHVVIGDRLLEQGLVEYKNRKTQEKQEIRLEKLFDILA.

Belongs to the class-II aminoacyl-tRNA synthetase family. ProS type 1 subfamily. As to quaternary structure, homodimer.

The protein localises to the cytoplasm. It catalyses the reaction tRNA(Pro) + L-proline + ATP = L-prolyl-tRNA(Pro) + AMP + diphosphate. Functionally, catalyzes the attachment of proline to tRNA(Pro) in a two-step reaction: proline is first activated by ATP to form Pro-AMP and then transferred to the acceptor end of tRNA(Pro). As ProRS can inadvertently accommodate and process non-cognate amino acids such as alanine and cysteine, to avoid such errors it has two additional distinct editing activities against alanine. One activity is designated as 'pretransfer' editing and involves the tRNA(Pro)-independent hydrolysis of activated Ala-AMP. The other activity is designated 'posttransfer' editing and involves deacylation of mischarged Ala-tRNA(Pro). The misacylated Cys-tRNA(Pro) is not edited by ProRS. The sequence is that of Proline--tRNA ligase from Francisella philomiragia subsp. philomiragia (strain ATCC 25017 / CCUG 19701 / FSC 153 / O#319-036).